An 808-amino-acid polypeptide reads, in one-letter code: DNA gyrase subunit B (808 aa).

The Toprim domain occupies 429–544 (SELFIVEGDS…KGYLYIAQPP (116 aa)). Glutamate 435, aspartate 509, and aspartate 511 together coordinate Mg(2+).

This sequence belongs to the type II topoisomerase GyrB family. As to quaternary structure, heterotetramer, composed of two GyrA and two GyrB chains. In the heterotetramer, GyrA contains the active site tyrosine that forms a transient covalent intermediate with DNA, while GyrB binds cofactors and catalyzes ATP hydrolysis. Mg(2+) serves as cofactor. Mn(2+) is required as a cofactor. The cofactor is Ca(2+).

Its subcellular location is the cytoplasm. The enzyme catalyses ATP-dependent breakage, passage and rejoining of double-stranded DNA.. Its function is as follows. A type II topoisomerase that negatively supercoils closed circular double-stranded (ds) DNA in an ATP-dependent manner to modulate DNA topology and maintain chromosomes in an underwound state. Negative supercoiling favors strand separation, and DNA replication, transcription, recombination and repair, all of which involve strand separation. Also able to catalyze the interconversion of other topological isomers of dsDNA rings, including catenanes and knotted rings. Type II topoisomerases break and join 2 DNA strands simultaneously in an ATP-dependent manner. The protein is DNA gyrase subunit B of Rickettsia felis (strain ATCC VR-1525 / URRWXCal2) (Rickettsia azadi).